We begin with the raw amino-acid sequence, 98 residues long: UPF0473 protein lp_2273 (98 aa).

Belongs to the UPF0473 family.

The polypeptide is UPF0473 protein lp_2273 (Lactiplantibacillus plantarum (strain ATCC BAA-793 / NCIMB 8826 / WCFS1) (Lactobacillus plantarum)).